Reading from the N-terminus, the 350-residue chain is UDP-N-acetylglucosamine--N-acetylmuramyl-(pentapeptide) pyrophosphoryl-undecaprenol N-acetylglucosamine transferase (350 aa).

UDP-N-acetyl-alpha-D-glucosamine is bound by residues 9-11 (TGG), Asn-123, Arg-159, Ser-181, and Gln-281.

It belongs to the glycosyltransferase 28 family. MurG subfamily.

It localises to the cell inner membrane. It carries out the reaction di-trans,octa-cis-undecaprenyl diphospho-N-acetyl-alpha-D-muramoyl-L-alanyl-D-glutamyl-meso-2,6-diaminopimeloyl-D-alanyl-D-alanine + UDP-N-acetyl-alpha-D-glucosamine = di-trans,octa-cis-undecaprenyl diphospho-[N-acetyl-alpha-D-glucosaminyl-(1-&gt;4)]-N-acetyl-alpha-D-muramoyl-L-alanyl-D-glutamyl-meso-2,6-diaminopimeloyl-D-alanyl-D-alanine + UDP + H(+). Its pathway is cell wall biogenesis; peptidoglycan biosynthesis. In terms of biological role, cell wall formation. Catalyzes the transfer of a GlcNAc subunit on undecaprenyl-pyrophosphoryl-MurNAc-pentapeptide (lipid intermediate I) to form undecaprenyl-pyrophosphoryl-MurNAc-(pentapeptide)GlcNAc (lipid intermediate II). In Helicobacter hepaticus (strain ATCC 51449 / 3B1), this protein is UDP-N-acetylglucosamine--N-acetylmuramyl-(pentapeptide) pyrophosphoryl-undecaprenol N-acetylglucosamine transferase.